A 398-amino-acid polypeptide reads, in one-letter code: Immunoglobulin heavy constant gamma 2A (398 aa).

3 consecutive Ig-like domains span residues 5-97 (PSVY…KKIE), 120-219 (PSVF…RTIS), and 228-324 (PQVY…KSFS). 3 disulfide bridges follow: C26–C81, C143–C203, and C249–C307. N179 carries an N-linked (GlcNAc...) asparagine glycan. A helical membrane pass occupies residues 345–362 (GLWTTITIFISLFLLSVC). The Cytoplasmic portion of the chain corresponds to 363 to 398 (YSASVTLFKVKWIFSSVVELKQTISPDYRNMIGQGA).

It localises to the cell membrane. In Mus musculus (Mouse), this protein is Immunoglobulin heavy constant gamma 2A.